The chain runs to 180 residues: Adenine phosphoribosyltransferase (180 aa).

Serine 2 is modified (N-acetylserine). A phosphoserine mark is found at serine 4, serine 15, and serine 30. A Phosphotyrosine modification is found at tyrosine 60. The residue at position 66 (serine 66) is a Phosphoserine. Lysine 114 is modified (N6-acetyllysine). Threonine 135 carries the phosphothreonine modification.

Belongs to the purine/pyrimidine phosphoribosyltransferase family. As to quaternary structure, homodimer.

It is found in the cytoplasm. The enzyme catalyses AMP + diphosphate = 5-phospho-alpha-D-ribose 1-diphosphate + adenine. It participates in purine metabolism; AMP biosynthesis via salvage pathway; AMP from adenine: step 1/1. In terms of biological role, catalyzes a salvage reaction resulting in the formation of AMP, that is energically less costly than de novo synthesis. The polypeptide is Adenine phosphoribosyltransferase (Rattus norvegicus (Rat)).